The chain runs to 495 residues: Probable polyamine transporter At1g31830 (495 aa).

Transmembrane regions (helical) follow at residues 49–69 (VSML…PFGV), 79–99 (LLAL…EALI), 112–132 (GYVV…QGWM), 156–176 (VPAL…TILL), 186–206 (IVGW…AVMG), 230–250 (LYLN…TLAG), 267–287 (VILV…AIPL), 357–377 (TPLL…WLSF), 380–400 (IVAA…IAFV), 417–437 (IGTT…CAVV), and 442–462 (LKVA…HPLL).

It belongs to the amino acid-polyamine-organocation (APC) superfamily. Polyamine:cation symporter (PHS) (TC 2.A.3.12) family.

Its subcellular location is the cell membrane. In terms of biological role, probable cell membrane polyamine/proton symporter involved in the polyamine uptake in cells. In Arabidopsis thaliana (Mouse-ear cress), this protein is Probable polyamine transporter At1g31830.